Reading from the N-terminus, the 394-residue chain is ATP phosphoribosyltransferase regulatory subunit (394 aa).

The protein belongs to the class-II aminoacyl-tRNA synthetase family. HisZ subfamily. As to quaternary structure, heteromultimer composed of HisG and HisZ subunits.

The protein resides in the cytoplasm. It participates in amino-acid biosynthesis; L-histidine biosynthesis; L-histidine from 5-phospho-alpha-D-ribose 1-diphosphate: step 1/9. Its function is as follows. Required for the first step of histidine biosynthesis. May allow the feedback regulation of ATP phosphoribosyltransferase activity by histidine. The protein is ATP phosphoribosyltransferase regulatory subunit of Pseudomonas aeruginosa (strain LESB58).